Consider the following 701-residue polypeptide: F-box/LRR-repeat protein 17 (701 aa).

Over residues 1 to 11 the composition is skewed to basic and acidic residues; sequence MGHLLSKEPRN. Disordered regions lie at residues 1–20, 72–94, and 227–300; these read MGHL…RPRC, APAG…YAAA, and GGGG…DADC. A compositionally biased stretch (gly residues) spans 227–237; sequence GGGGGPAGGGA. Over residues 252–264 the composition is skewed to pro residues; it reads EQPPQPLCPPPSS. The F-box domain maps to 318 to 365; sequence TPDINQLPPSILLKIFSNLSLDERCLSASLVCKYWRDLCLDFQFWKQL.

The protein belongs to the FBXL17 family. In terms of assembly, part of the SCF (SKP1-CUL1-F-box) E3 ubiquitin-protein ligase complex SCF(FBXL17) composed of CUL1, SKP1, RBX1 and FBXL17. Interacts with BTB domain-containing proteins such as KLHL12, BCL6 and BACH1; specifically recognizes and binds a conserved degron of non-consecutive residues present at the interface of BTB dimers of aberrant composition. Interacts with SUFU. Interacts with PRMT1.

The protein localises to the cytoplasm. It is found in the nucleus. Functionally, substrate-recognition component of the SCF(FBXL17) E3 ubiquitin ligase complex, a key component of a quality control pathway required to ensure functional dimerization of BTB domain-containing proteins (dimerization quality control, DQC). FBXL17 specifically recognizes and binds a conserved degron of non-consecutive residues present at the interface of BTB dimers of aberrant composition: aberrant BTB dimer are then ubiquitinated by the SCF(FBXL17) complex and degraded by the proteasome. The ability of the SCF(FBXL17) complex to eliminate compromised BTB dimers is required for the differentiation and survival of neural crest and neuronal cells. The SCF(FBXL17) complex mediates ubiquitination and degradation of BACH1. The SCF(FBXL17) complex is also involved in the regulation of the hedgehog/smoothened (Hh) signaling pathway by mediating the ubiquitination and degradation of SUFU, allowing the release of GLI1 from SUFU for proper Hh signal transduction. The SCF(FBXL17) complex mediates ubiquitination and degradation of PRMT1. The protein is F-box/LRR-repeat protein 17 of Homo sapiens (Human).